Here is a 140-residue protein sequence, read N- to C-terminus: Large ribosomal subunit protein uL13 (140 aa).

As to quaternary structure, part of the 50S ribosomal subunit.

Its function is as follows. This protein is one of the early assembly proteins of the 50S ribosomal subunit, although it is not seen to bind rRNA by itself. It is important during the early stages of 50S assembly. The sequence is that of Large ribosomal subunit protein uL13 from Thermus thermophilus (strain ATCC 27634 / DSM 579 / HB8).